The primary structure comprises 614 residues: Kelch-like protein 40 (614 aa).

Positions 33-100 (IDCVLKIQGK…IYTSEIEITE (68 aa)) constitute a BTB domain. Residues 135–237 (CLAIFRLGLL…PQDYIKNKVE (103 aa)) enclose the BACK domain. 5 Kelch repeats span residues 353-405 (QLFV…ESEN), 406-455 (SIYL…SHDN), 456-503 (LVYV…VHKG), 504-550 (KIFI…SMNG), and 552-606 (LYAI…AARL).

This sequence belongs to the KLHL40 family. Component of the BCR(KLHL40) E3 ubiquitin ligase complex.

The protein resides in the cytoplasm. The protein localises to the myofibril. Its subcellular location is the sarcomere. It is found in the a band. It localises to the i band. Functionally, substrate-specific adapter of a BCR (BTB-CUL3-RBX1) E3 ubiquitin ligase complex that acts as a key regulator of skeletal muscle development. This Xenopus laevis (African clawed frog) protein is Kelch-like protein 40 (klhl40).